The primary structure comprises 421 residues: C2H2 type master regulator of conidiophore development brlA (421 aa).

2 C2H2-type zinc fingers span residues 309–333 (FKCK…MKSH) and 339–364 (HVCW…TKTH). Positions 379-421 (ESSPDYDPDFRGQLTPDGLPIRGSTLDDPMPNSREYSVDGLDD) are disordered.

The protein resides in the nucleus. Functionally, brlA, abaA and wetA are pivotal regulators of conidiophore development and conidium maturation. They act individually and together to regulate their own expression and that of numerous other sporulation-specific genes. Binds promoters of target genes at brlA response elements (BREs) containing the conserved sequence 5'-(C/A)(A/G)AGGG(G/A)-3'. Required for conidiophores formation. Controls expression of abaA. This is C2H2 type master regulator of conidiophore development brlA from Aspergillus oryzae (strain ATCC 42149 / RIB 40) (Yellow koji mold).